Here is a 418-residue protein sequence, read N- to C-terminus: Tyrosine--tRNA ligase (418 aa).

Tyr-39 serves as a coordination point for L-tyrosine. The short motif at Cys-44–His-53 is the 'HIGH' region element. L-tyrosine-binding residues include Tyr-176 and Gln-180. Positions Lys-236–Thr-240 match the 'KMSKS' region motif. ATP is bound at residue Lys-239. One can recognise an S4 RNA-binding domain in the interval Ile-350 to Ala-418.

Belongs to the class-I aminoacyl-tRNA synthetase family. TyrS type 1 subfamily. As to quaternary structure, homodimer.

The protein resides in the cytoplasm. The catalysed reaction is tRNA(Tyr) + L-tyrosine + ATP = L-tyrosyl-tRNA(Tyr) + AMP + diphosphate + H(+). Functionally, catalyzes the attachment of tyrosine to tRNA(Tyr) in a two-step reaction: tyrosine is first activated by ATP to form Tyr-AMP and then transferred to the acceptor end of tRNA(Tyr). This Rhodopseudomonas palustris (strain ATCC BAA-98 / CGA009) protein is Tyrosine--tRNA ligase.